The sequence spans 65 residues: UPF0434 protein IL1511 (65 aa).

The protein belongs to the UPF0434 family.

This chain is UPF0434 protein IL1511, found in Idiomarina loihiensis (strain ATCC BAA-735 / DSM 15497 / L2-TR).